The sequence spans 637 residues: Biosynthetic arginine decarboxylase (637 aa).

Position 101 is an N6-(pyridoxal phosphate)lysine (Lys-101). Substrate is bound at residue 286 to 296; it reads FDVGGGLAVDY.

The protein belongs to the Orn/Lys/Arg decarboxylase class-II family. SpeA subfamily. The cofactor is Mg(2+). Requires pyridoxal 5'-phosphate as cofactor.

It carries out the reaction L-arginine + H(+) = agmatine + CO2. It participates in amine and polyamine biosynthesis; agmatine biosynthesis; agmatine from L-arginine: step 1/1. Catalyzes the biosynthesis of agmatine from arginine. This is Biosynthetic arginine decarboxylase from Shewanella putrefaciens (strain CN-32 / ATCC BAA-453).